The primary structure comprises 271 residues: MKRTDAPLVFAITSKGDDISNALAQKMKTYLLDFDLRYDEEEPDLVISVGGDGTLLYAFHRYCHRLDKTAFVGVHTGHLGFYADWVPEELEKLVIAIAKTPYQVVEYPLLEVTIRYLNGGSEAKYLALNECTVKCVSGTLVMDVEIRGDLFERFRGDGLCISTPTGSTAYNKALGGAILHPSLEAIQVTEMASINNRVFRTIGSPLVLPAHHTCLLKPVNHVDFQITIDHLSLLHKEVKSIQCRVADEKVRFARFRPFPFWRRVRDSFIAD.

The active-site Proton acceptor is the Asp52. Residues 52–53, 129–130, Arg155, Asp157, and Ala192 contribute to the NAD(+) site; these read DG and NE.

Belongs to the NAD kinase family. It depends on a divalent metal cation as a cofactor.

It localises to the cytoplasm. The enzyme catalyses NAD(+) + ATP = ADP + NADP(+) + H(+). In terms of biological role, involved in the regulation of the intracellular balance of NAD and NADP, and is a key enzyme in the biosynthesis of NADP. Catalyzes specifically the phosphorylation on 2'-hydroxyl of the adenosine moiety of NAD to yield NADP. The polypeptide is NAD kinase (Geobacillus stearothermophilus (Bacillus stearothermophilus)).